The sequence spans 1350 residues: ABC-type transporter MDR1 (1350 aa).

Residues Met1 to Ser11 show a composition bias toward basic and acidic residues. Residues Met1 to Leu84 are disordered. A compositionally biased stretch (polar residues) spans Val22–Gly33. Basic residues predominate over residues Lys52–Lys63. One can recognise an ABC transmembrane type-1 1 domain in the interval Val121–Thr411. Transmembrane regions (helical) follow at residues Ala124 to Leu144, Leu170 to Phe190, Lys243 to Ile263, Ile271 to Val291, Gly350 to Met370, and Ile380 to Gly400. An ABC transporter 1 domain is found at Ile446–Ala691. Gly481–Ser488 contacts ATP. Residues Lys712–Lys731 are compositionally biased toward basic and acidic residues. Positions Lys712–Arg734 are disordered. 6 helical membrane passes run Ile779 to Ala799, Phe830 to Cys850, Leu903 to Ile923, Leu929 to Leu949, Ala1014 to Ile1034, and Phe1044 to Phe1064. One can recognise an ABC transmembrane type-1 2 domain in the interval Ile779–Lys1070. The region spanning Ile1105 to Leu1343 is the ABC transporter 2 domain. An N-linked (GlcNAc...) asparagine glycan is attached at Asn1127. Gly1140 to Ser1147 serves as a coordination point for ATP.

This sequence belongs to the ABC transporter superfamily. ABCB family. Multidrug resistance exporter (TC 3.A.1.201) subfamily.

Its subcellular location is the cell membrane. In terms of biological role, ABC-type transporter that is involved in the secretion of liamocins, glycolipids (also called heavy oils) composed of a single mannitol or arabitol headgroup linked to either three, four or even six 3,5-dihydroxydecanoic ester tail-groups. The chain is ABC-type transporter MDR1 from Aureobasidium melanogenum (Aureobasidium pullulans var. melanogenum).